Consider the following 202-residue polypeptide: Holliday junction resolvase RecU (202 aa).

The Mg(2+) site is built by threonine 85, aspartate 87, glutamate 100, and glutamine 119.

This sequence belongs to the RecU family. Mg(2+) is required as a cofactor.

Its subcellular location is the cytoplasm. The catalysed reaction is Endonucleolytic cleavage at a junction such as a reciprocal single-stranded crossover between two homologous DNA duplexes (Holliday junction).. Endonuclease that resolves Holliday junction intermediates in genetic recombination. Cleaves mobile four-strand junctions by introducing symmetrical nicks in paired strands. Promotes annealing of linear ssDNA with homologous dsDNA. Required for DNA repair, homologous recombination and chromosome segregation. The polypeptide is Holliday junction resolvase RecU (Streptococcus pyogenes serotype M6 (strain ATCC BAA-946 / MGAS10394)).